The primary structure comprises 369 residues: DNA replication and repair protein RecF (369 aa).

ATP is bound at residue 30–37 (GDNAQGKT).

Belongs to the RecF family.

The protein localises to the cytoplasm. In terms of biological role, the RecF protein is involved in DNA metabolism; it is required for DNA replication and normal SOS inducibility. RecF binds preferentially to single-stranded, linear DNA. It also seems to bind ATP. This is DNA replication and repair protein RecF from Streptococcus equi subsp. zooepidemicus (strain H70).